The primary structure comprises 337 residues: MASIHRPKRGSLAFSPRKRAKSHIPRFRAWPEATGEPRLQGFAGYKVGMTHVIMVDDTKNSLTQGMEISVPVTIIETPAIRVAAIRAYAEDTAGEKAIAEVWATDLDPELKRRIPVPKGDNMAETLGNIGKMIEEGKVSDIRAVTYTLPKSLTGVPKKTPDIMESGISARDLNTKFEYAKSILGTLVSITDVFKTGTLIDTAAITIGKGTQGPAKRWGIQLMKGKHSRQGSLRQIGTLGGFGLRRVSWRVPQMGQTGYHQRTEFNKRILKIGSDGEEVTPEGGFINYGLVRGDYVLIKGSVPGPSKRLIRLRDPIRAKKADLGEPNILHISRESKQG.

Positions 1–20 (MASIHRPKRGSLAFSPRKRA) are disordered.

It belongs to the universal ribosomal protein uL3 family. As to quaternary structure, part of the 50S ribosomal subunit. Forms a cluster with proteins L14 and L24e.

One of the primary rRNA binding proteins, it binds directly near the 3'-end of the 23S rRNA, where it nucleates assembly of the 50S subunit. This Methanosarcina barkeri (strain Fusaro / DSM 804) protein is Large ribosomal subunit protein uL3.